The sequence spans 207 residues: ATP-dependent Clp protease proteolytic subunit 1 (207 aa).

Ser103 serves as the catalytic Nucleophile. His128 is a catalytic residue.

Belongs to the peptidase S14 family. Fourteen ClpP subunits assemble into 2 heptameric rings which stack back to back to give a disk-like structure with a central cavity, resembling the structure of eukaryotic proteasomes.

It is found in the cytoplasm. It carries out the reaction Hydrolysis of proteins to small peptides in the presence of ATP and magnesium. alpha-casein is the usual test substrate. In the absence of ATP, only oligopeptides shorter than five residues are hydrolyzed (such as succinyl-Leu-Tyr-|-NHMec, and Leu-Tyr-Leu-|-Tyr-Trp, in which cleavage of the -Tyr-|-Leu- and -Tyr-|-Trp bonds also occurs).. Its function is as follows. Cleaves peptides in various proteins in a process that requires ATP hydrolysis. Has a chymotrypsin-like activity. Plays a major role in the degradation of misfolded proteins. The protein is ATP-dependent Clp protease proteolytic subunit 1 of Synechococcus sp. (strain CC9605).